We begin with the raw amino-acid sequence, 319 residues long: Acetyl-coenzyme A carboxylase carboxyl transferase subunit alpha (319 aa).

One can recognise a CoA carboxyltransferase C-terminal domain in the interval 35–296; it reads NIDEEVHRLR…KAQLLTDLAD (262 aa).

This sequence belongs to the AccA family. As to quaternary structure, acetyl-CoA carboxylase is a heterohexamer composed of biotin carboxyl carrier protein (AccB), biotin carboxylase (AccC) and two subunits each of ACCase subunit alpha (AccA) and ACCase subunit beta (AccD).

It is found in the cytoplasm. It catalyses the reaction N(6)-carboxybiotinyl-L-lysyl-[protein] + acetyl-CoA = N(6)-biotinyl-L-lysyl-[protein] + malonyl-CoA. It functions in the pathway lipid metabolism; malonyl-CoA biosynthesis; malonyl-CoA from acetyl-CoA: step 1/1. Functionally, component of the acetyl coenzyme A carboxylase (ACC) complex. First, biotin carboxylase catalyzes the carboxylation of biotin on its carrier protein (BCCP) and then the CO(2) group is transferred by the carboxyltransferase to acetyl-CoA to form malonyl-CoA. This chain is Acetyl-coenzyme A carboxylase carboxyl transferase subunit alpha, found in Escherichia coli O45:K1 (strain S88 / ExPEC).